The primary structure comprises 500 residues: Glycerol kinase (500 aa).

ADP is bound at residue T15. The ATP site is built by T15, T16, and S17. A sn-glycerol 3-phosphate-binding site is contributed by T15. R19 contacts ADP. Sn-glycerol 3-phosphate contacts are provided by R85, E86, Y137, and D245. Glycerol is bound by residues R85, E86, Y137, D245, and Q246. The ADP site is built by T267 and G310. The ATP site is built by T267, G310, Q314, and G411. Positions 411 and 415 each coordinate ADP.

The protein belongs to the FGGY kinase family.

It carries out the reaction glycerol + ATP = sn-glycerol 3-phosphate + ADP + H(+). The protein operates within polyol metabolism; glycerol degradation via glycerol kinase pathway; sn-glycerol 3-phosphate from glycerol: step 1/1. Inhibited by fructose 1,6-bisphosphate (FBP). Functionally, key enzyme in the regulation of glycerol uptake and metabolism. Catalyzes the phosphorylation of glycerol to yield sn-glycerol 3-phosphate. The polypeptide is Glycerol kinase (Aeromonas hydrophila subsp. hydrophila (strain ATCC 7966 / DSM 30187 / BCRC 13018 / CCUG 14551 / JCM 1027 / KCTC 2358 / NCIMB 9240 / NCTC 8049)).